We begin with the raw amino-acid sequence, 340 residues long: Glyceraldehyde-3-phosphate dehydrogenase (340 aa).

Residues 12–13 (RI), aspartate 40, lysine 85, and serine 128 contribute to the NAD(+) site. Residues 158–160 (SCT), threonine 189, arginine 204, 217–218 (TG), and arginine 240 each bind D-glyceraldehyde 3-phosphate. Cysteine 159 serves as the catalytic Nucleophile. Residue lysine 257 forms an Isoglutamyl lysine isopeptide (Lys-Gln) (interchain with Q-Cter in protein Pup) linkage. Asparagine 321 contributes to the NAD(+) binding site.

Belongs to the glyceraldehyde-3-phosphate dehydrogenase family. In terms of assembly, homotetramer.

The protein resides in the cytoplasm. It catalyses the reaction D-glyceraldehyde 3-phosphate + phosphate + NAD(+) = (2R)-3-phospho-glyceroyl phosphate + NADH + H(+). Its pathway is carbohydrate degradation; glycolysis; pyruvate from D-glyceraldehyde 3-phosphate: step 1/5. Its function is as follows. Catalyzes the oxidative phosphorylation of glyceraldehyde 3-phosphate (G3P) to 1,3-bisphosphoglycerate (BPG) using the cofactor NAD. The first reaction step involves the formation of a hemiacetal intermediate between G3P and a cysteine residue, and this hemiacetal intermediate is then oxidized to a thioester, with concomitant reduction of NAD to NADH. The reduced NADH is then exchanged with the second NAD, and the thioester is attacked by a nucleophilic inorganic phosphate to produce BPG. This chain is Glyceraldehyde-3-phosphate dehydrogenase (gapA), found in Mycolicibacterium smegmatis (strain ATCC 700084 / mc(2)155) (Mycobacterium smegmatis).